Here is a 359-residue protein sequence, read N- to C-terminus: MDSVALYCTAGLIAGAVYWFICVLGPAERKGKRASDLSGGSISAEKVKDNYNQYWSFFRKPKEIESAEKVPDFVDTFYNLVTDIYEWGWGQSFHFSPHVPGKSDKDATRIHEEMAVDLIKVKPGQKILDAGCGVGGPMRAIAAHSKAQVTGITINEYQVQRAKLHNKKAGLDSLCNVVCGNFLKMPFDENTFDGAYSIEATCHAPKLEEVYSEIFRVMKPGSLFVSYEWVTTEKYRDDDEEHKDVIQGIERGDALPGLRSYADIAVTAKKVGFEVVKEKDLAKPPSKPWWNRLKMGRIAYWRNHVVVVILSAIGVAPKGTVDVHKMLFKTADYLTRGGETGIFSPMHMILCRKPEKASE.

The helical transmembrane segment at 4 to 24 (VALYCTAGLIAGAVYWFICVL) threads the bilayer.

This sequence belongs to the class I-like SAM-binding methyltransferase superfamily. Erg6/SMT family.

It localises to the membrane. It catalyses the reaction 24-methylidenelophenol + S-adenosyl-L-methionine = (Z)-24-ethylidenelophenol + S-adenosyl-L-homocysteine + H(+). The protein operates within steroid biosynthesis; sterol biosynthesis. Functionally, catalyzes the methyl transfer from S-adenosyl-methionine to the methylene group of 24-methylene lophenol to form 24-ethylidene lophenol. The polypeptide is 24-methylenesterol C-methyltransferase 3 (SMT3) (Arabidopsis thaliana (Mouse-ear cress)).